The sequence spans 396 residues: Beta-1,4-galactosyltransferase 3 (396 aa).

The Cytoplasmic portion of the chain corresponds to 1 to 10; sequence MLRRLLERPC. The helical; Signal-anchor for type II membrane protein transmembrane segment at 11 to 31 threads the bilayer; the sequence is TLALLVGSQLAVMMYLSLGGF. Residues 32-396 are Lumenal-facing; the sequence is RSLSALFGRE…ANHTAPHGSH (365 aa). The N-linked (GlcNAc...) asparagine glycan is linked to Asn-57. A disulfide bond links Cys-80 and Cys-122. 133 to 137 contributes to the UDP-alpha-D-galactose binding site; sequence PHRAR. N-linked (GlcNAc...) asparagine glycosylation is present at Asn-169. UDP-alpha-D-galactose contacts are provided by residues 172-174, 199-200, Tyr-229, and Trp-261; these read FNR and VD. Cys-193 and Cys-212 are joined by a disulfide. Asp-200 lines the Mn(2+) pocket. N-acetyl-D-glucosamine is bound at residue 263 to 266; that stretch reads GEDD. His-294 is a binding site for Mn(2+). 294 to 296 contributes to the UDP-alpha-D-galactose binding site; the sequence is HRG. Arg-306 contributes to the N-acetyl-D-glucosamine binding site. N-linked (GlcNAc...) asparagine glycosylation is present at Asn-340. Residues 341–396 form a disordered region; that stretch reads ITADIGTDPRGPRTSSGPHYPPGSSQAFRQEMLQRRPPARPGPLPTANHTAPHGSH. Polar residues predominate over residues 353–368; sequence RTSSGPHYPPGSSQAF. A glycan (N-linked (GlcNAc...) asparagine) is linked at Asn-388.

It belongs to the glycosyltransferase 7 family. Mn(2+) is required as a cofactor.

Its subcellular location is the golgi apparatus. It is found in the golgi stack membrane. It carries out the reaction an N-acetyl-beta-D-glucosaminyl derivative + UDP-alpha-D-galactose = a beta-D-galactosyl-(1-&gt;4)-N-acetyl-beta-D-glucosaminyl derivative + UDP + H(+). The catalysed reaction is N-acetyl-D-glucosamine + UDP-alpha-D-galactose = beta-D-galactosyl-(1-&gt;4)-N-acetyl-D-glucosamine + UDP + H(+). It catalyses the reaction a beta-D-GlcNAc-(1-&gt;3)-beta-D-Gal-(1-&gt;4)-beta-D-Glc-(1&lt;-&gt;1)-Cer(d18:1(4E)) + UDP-alpha-D-galactose = a neolactoside nLc4Cer(d18:1(4E)) + UDP + H(+). The enzyme catalyses a beta-D-glucosylceramide + UDP-alpha-D-galactose = a beta-D-galactosyl-(1-&gt;4)-beta-D-glucosyl-(1&lt;-&gt;1)-ceramide + UDP + H(+). It carries out the reaction a neolactoside IV(3)-beta-GlcNAc-nLc4Cer + UDP-alpha-D-galactose = a neolactoside nLc6Cer + UDP + H(+). Its pathway is protein modification; protein glycosylation. Functionally, responsible for the synthesis of complex-type N-linked oligosaccharides in many glycoproteins as well as the carbohydrate moieties of glycolipids. The protein is Beta-1,4-galactosyltransferase 3 (B4GALT3) of Bos taurus (Bovine).